We begin with the raw amino-acid sequence, 145 residues long: Class I hydrophobin 1 (145 aa).

The first 19 residues, 1 to 19 (MKFSYAIAAVVAAAASVQA), serve as a signal peptide directing secretion. 4 cysteine pairs are disulfide-bonded: C65–C126, C72–C120, C73–C106, and C127–C140. N-linked (GlcNAc...) asparagine glycans are attached at residues N80 and N129.

This sequence belongs to the fungal hydrophobin family. In terms of assembly, self-assembles to form functional amyloid fibrils called rodlets. Self-assembly into fibrillar rodlets occurs spontaneously at hydrophobic:hydrophilic interfaces and the rodlets further associate laterally to form amphipathic monolayers.

It is found in the secreted. Its subcellular location is the cell wall. In terms of biological role, aerial growth, conidiation, and dispersal of filamentous fungi in the environment rely upon a capability of their secreting small amphipathic proteins called hydrophobins (HPBs) with low sequence identity. Class I can self-assemble into an outermost layer of rodlet bundles on aerial cell surfaces, conferring cellular hydrophobicity that supports fungal growth, development and dispersal; whereas Class II form highly ordered films at water-air interfaces through intermolecular interactions but contribute nothing to the rodlet structure. Hyd1 is a class I hydrophobin that is crucial for the initiation of primordia formation. Plays also important roles in nitrogen regulation and resistance to abiotic stresses. The chain is Class I hydrophobin 1 from Ganoderma lucidum (Ling zhi medicinal fungus).